The following is a 291-amino-acid chain: MAVGKEILTKIRSVQNTQKITKAMQMVSTSKMRKTQERMRLARPYAEKVRMVMSHLAQTNTDHGIPLLESHREIRRVGFILITSDKGLCGGLNANVLKKFLAQVQEYQNQGIEEEIVCLGSKGLMACQSIGLNVVASAVNLGDTPKMEMLLGPLTELFQRYEKHEIDRIHLVYSGFVNTMRQEPRMEVLLPIGENVIGDSAPKSPFSWEYRYEPTALAVLEYLVRRYLESVVYQALSDNMASEQAARMVAMKAATDNAGNAIKELRLVYNKSRQAAITTELSEIVAGAAAV.

Belongs to the ATPase gamma chain family. In terms of assembly, F-type ATPases have 2 components, CF(1) - the catalytic core - and CF(0) - the membrane proton channel. CF(1) has five subunits: alpha(3), beta(3), gamma(1), delta(1), epsilon(1). CF(0) has three main subunits: a, b and c.

It localises to the cell inner membrane. Produces ATP from ADP in the presence of a proton gradient across the membrane. The gamma chain is believed to be important in regulating ATPase activity and the flow of protons through the CF(0) complex. This is ATP synthase gamma chain from Neisseria meningitidis serogroup A / serotype 4A (strain DSM 15465 / Z2491).